Consider the following 81-residue polypeptide: ATP synthase subunit C, plastid (81 aa).

The next 2 helical transmembrane spans lie at 3-23 (PIIS…ASIG) and 57-77 (LAFM…LLFA).

Belongs to the ATPase C chain family. As to quaternary structure, F-type ATPases have 2 components, F(1) - the catalytic core - and F(0) - the membrane proton channel. F(1) has five subunits: alpha(3), beta(3), gamma(1), delta(1), epsilon(1). F(0) has four main subunits: a(1), b(1), b'(1) and c(10-14). The alpha and beta chains form an alternating ring which encloses part of the gamma chain. F(1) is attached to F(0) by a central stalk formed by the gamma and epsilon chains, while a peripheral stalk is formed by the delta, b and b' chains.

The protein resides in the plastid membrane. Functionally, f(1)F(0) ATP synthase produces ATP from ADP in the presence of a proton or sodium gradient. F-type ATPases consist of two structural domains, F(1) containing the extramembraneous catalytic core and F(0) containing the membrane proton channel, linked together by a central stalk and a peripheral stalk. During catalysis, ATP synthesis in the catalytic domain of F(1) is coupled via a rotary mechanism of the central stalk subunits to proton translocation. Its function is as follows. Key component of the F(0) channel; it plays a direct role in translocation across the membrane. A homomeric c-ring of between 10-14 subunits forms the central stalk rotor element with the F(1) delta and epsilon subunits. The chain is ATP synthase subunit C, plastid from Cuscuta gronovii (Common dodder).